Here is a 77-residue protein sequence, read N- to C-terminus: U8-lycotoxin-Ls1e (77 aa).

The signal sequence occupies residues 1 to 20; that stretch reads MKLIIFTGLVLFAIVSLIEA. The propeptide occupies 21–26; that stretch reads QAENEK.

It belongs to the neurotoxin 19 (CSTX) family. 08 (U8-Lctx) subfamily. Contains 4 disulfide bonds. In terms of tissue distribution, expressed by the venom gland.

The protein localises to the secreted. The protein is U8-lycotoxin-Ls1e of Lycosa singoriensis (Wolf spider).